The primary structure comprises 997 residues: FIP1[III]-like protein (997 aa).

4 disordered regions span residues 250–272, 289–475, 534–553, and 880–900; these read ITSNEASRSDVSHSYGSKDLNSV, AGSF…ETEG, SRSSFDLNQRNSRSSFKEED, and QGKVSNQSKKRFSNGGDTIEQ. Over residues 261 to 272 the composition is skewed to polar residues; the sequence is SHSYGSKDLNSV. Composition is skewed to basic and acidic residues over residues 309-323, 334-346, 367-379, and 388-404; these read TPSDKEMLEKEKEES, SVERESSLGDRIR, ESLKDSATDDQRE, and RLAEHEAISIKRGEDSG. A Nuclear localization signal motif is present at residues 397 to 404; sequence IKRGEDSG. The segment covering 534-547 has biased composition (polar residues); that stretch reads SRSSFDLNQRNSRS. Residues 930 to 963 adopt a coiled-coil conformation; it reads EIIEEVKGVEIDNERIQESLKKMEKRRERFKGTK.

Belongs to the FIP1 family. As to quaternary structure, component of the cleavage and polyadenylation specificity factor (CPSF) complex. Forms a complex with cleavage and polyadenylation specificity factor (CPSF) subunits CLPS5, FIPS5, PAPS4, PCFS1, CSTF64 and CPSF30.

It is found in the nucleus. Its function is as follows. Component of the cleavage and polyadenylation specificity factor (CPSF) complex that plays a key role in pre-mRNA 3'-end formation, recognizing the AAUAAA signal sequence and interacting with poly(A) polymerase and other factors to bring about cleavage and poly(A) addition. FIP1L1 contributes to poly(A) site recognition and stimulates poly(A) addition. Binds to U-rich RNA sequence elements surrounding the poly(A) site. May act to tether poly(A) polymerase to the CPSF complex. The chain is FIP1[III]-like protein from Arabidopsis thaliana (Mouse-ear cress).